Reading from the N-terminus, the 150-residue chain is Aspartate 1-decarboxylase (150 aa).

The active-site Schiff-base intermediate with substrate; via pyruvic acid is the Ser24. Ser24 carries the pyruvic acid (Ser) modification. Thr56 is a substrate binding site. Tyr57 (proton donor) is an active-site residue. A substrate-binding site is contributed by 72 to 74 (GAA).

It belongs to the PanD family. Heterooctamer of four alpha and four beta subunits. Pyruvate is required as a cofactor. Is synthesized initially as an inactive proenzyme, which is activated by self-cleavage at a specific serine bond to produce a beta-subunit with a hydroxyl group at its C-terminus and an alpha-subunit with a pyruvoyl group at its N-terminus.

The protein resides in the cytoplasm. It catalyses the reaction L-aspartate + H(+) = beta-alanine + CO2. It participates in cofactor biosynthesis; (R)-pantothenate biosynthesis; beta-alanine from L-aspartate: step 1/1. Functionally, catalyzes the pyruvoyl-dependent decarboxylation of aspartate to produce beta-alanine. In Xanthobacter autotrophicus (strain ATCC BAA-1158 / Py2), this protein is Aspartate 1-decarboxylase.